A 424-amino-acid polypeptide reads, in one-letter code: Tyrosine--tRNA ligase 1 (424 aa).

Tyr-37 contributes to the L-tyrosine binding site. A 'HIGH' region motif is present at residues 42-51; sequence PTADSLHLGH. L-tyrosine contacts are provided by Tyr-175 and Gln-179. The 'KMSKS' region signature appears at 235–239; sequence KFGKT. Position 238 (Lys-238) interacts with ATP. An S4 RNA-binding domain is found at 357-414; that stretch reads ADLQQALVNAGLVPSRGQARTMISSNAVAINGEKQSEPEYLFTDSNRLFDRYTLLRRG.

Belongs to the class-I aminoacyl-tRNA synthetase family. TyrS type 1 subfamily. In terms of assembly, homodimer.

Its subcellular location is the cytoplasm. The enzyme catalyses tRNA(Tyr) + L-tyrosine + ATP = L-tyrosyl-tRNA(Tyr) + AMP + diphosphate + H(+). Its function is as follows. Catalyzes the attachment of tyrosine to tRNA(Tyr) in a two-step reaction: tyrosine is first activated by ATP to form Tyr-AMP and then transferred to the acceptor end of tRNA(Tyr). This is Tyrosine--tRNA ligase 1 from Photorhabdus laumondii subsp. laumondii (strain DSM 15139 / CIP 105565 / TT01) (Photorhabdus luminescens subsp. laumondii).